The chain runs to 446 residues: ATP-dependent protease ATPase subunit HslU (446 aa).

ATP is bound by residues Val-18, Gly-60–Glu-65, Asp-259, Glu-324, and Arg-396.

The protein belongs to the ClpX chaperone family. HslU subfamily. As to quaternary structure, a double ring-shaped homohexamer of HslV is capped on each side by a ring-shaped HslU homohexamer. The assembly of the HslU/HslV complex is dependent on binding of ATP.

It localises to the cytoplasm. In terms of biological role, ATPase subunit of a proteasome-like degradation complex; this subunit has chaperone activity. The binding of ATP and its subsequent hydrolysis by HslU are essential for unfolding of protein substrates subsequently hydrolyzed by HslV. HslU recognizes the N-terminal part of its protein substrates and unfolds these before they are guided to HslV for hydrolysis. This is ATP-dependent protease ATPase subunit HslU from Dechloromonas aromatica (strain RCB).